The chain runs to 271 residues: Delta(3,5)-Delta(2,4)-dienoyl-CoA isomerase (271 aa).

Substrate-binding positions include 62–66 (SGGKF) and L120. The active-site Proton donor/acceptor is the E152. The Peroxisome targeting signal (PTS1) motif lies at 269-271 (HKL).

It belongs to the enoyl-CoA hydratase/isomerase family. As to quaternary structure, interacts with ECI1.

The protein localises to the peroxisome. The enzyme catalyses a (3E,5Z)-dienoyl-CoA = a (2E,4E)-(5,6-saturated)-dienoyl-CoA. Its pathway is lipid metabolism; fatty acid beta-oxidation. In terms of biological role, peroxisomal di-isomerase that is involved in fatty acid metabolism enzyme by converting 3,5-dienoyl-CoAs to the corresponding 2,4-dienoyl-CoAs. Required for ECI1 to be located to the peroxisome. In Saccharomyces cerevisiae (strain ATCC 204508 / S288c) (Baker's yeast), this protein is Delta(3,5)-Delta(2,4)-dienoyl-CoA isomerase.